The primary structure comprises 142 residues: Large ribosomal subunit protein uL13 (142 aa).

This sequence belongs to the universal ribosomal protein uL13 family. In terms of assembly, part of the 50S ribosomal subunit.

In terms of biological role, this protein is one of the early assembly proteins of the 50S ribosomal subunit, although it is not seen to bind rRNA by itself. It is important during the early stages of 50S assembly. This Teredinibacter turnerae (strain ATCC 39867 / T7901) protein is Large ribosomal subunit protein uL13.